Here is a 398-residue protein sequence, read N- to C-terminus: 4-hydroxy-3-methylbut-2-en-1-yl diphosphate synthase (ferredoxin) (398 aa).

Residues Cys306, Cys309, Cys340, and Glu347 each contribute to the [4Fe-4S] cluster site.

It belongs to the IspG family. It depends on [4Fe-4S] cluster as a cofactor.

The catalysed reaction is (2E)-4-hydroxy-3-methylbut-2-enyl diphosphate + 2 oxidized [2Fe-2S]-[ferredoxin] + H2O = 2-C-methyl-D-erythritol 2,4-cyclic diphosphate + 2 reduced [2Fe-2S]-[ferredoxin] + H(+). Its pathway is isoprenoid biosynthesis; isopentenyl diphosphate biosynthesis via DXP pathway; isopentenyl diphosphate from 1-deoxy-D-xylulose 5-phosphate: step 5/6. Its function is as follows. Converts 2C-methyl-D-erythritol 2,4-cyclodiphosphate (ME-2,4cPP) into 1-hydroxy-2-methyl-2-(E)-butenyl 4-diphosphate. This chain is 4-hydroxy-3-methylbut-2-en-1-yl diphosphate synthase (ferredoxin), found in Synechococcus sp. (strain CC9311).